Reading from the N-terminus, the 274-residue chain is tRNA pseudouridine synthase A (274 aa).

The active-site Nucleophile is Asp51. Tyr109 contributes to the substrate binding site.

The protein belongs to the tRNA pseudouridine synthase TruA family. In terms of assembly, homodimer.

It catalyses the reaction uridine(38/39/40) in tRNA = pseudouridine(38/39/40) in tRNA. Formation of pseudouridine at positions 38, 39 and 40 in the anticodon stem and loop of transfer RNAs. The sequence is that of tRNA pseudouridine synthase A from Acidovorax ebreus (strain TPSY) (Diaphorobacter sp. (strain TPSY)).